The following is a 176-amino-acid chain: MLRFLNQCSRGRGAWLLMAFTALALEMVALWFQHVMLLKPCVLCIYERCALFGVMGAGLVGAIAPKTPLRYVAMVIWIYSAWRGLQLAYEHTMIQLHPSPFMTCDFMARFPDWLPLGKWLPQVFVASGDCAERQWSFLTLEMPQWLLGIFAAYLVVAIAVVIAQAFKPKKRDLFGR.

The Cytoplasmic portion of the chain corresponds to 1–14; that stretch reads MLRFLNQCSRGRGA. A helical transmembrane segment spans residues 15–31; the sequence is WLLMAFTALALEMVALW. The Periplasmic segment spans residues 32 to 49; the sequence is FQHVMLLKPCVLCIYERC. Cysteine 41 and cysteine 44 form a disulfide bridge. A helical membrane pass occupies residues 50–65; it reads ALFGVMGAGLVGAIAP. At 66 to 71 the chain is on the cytoplasmic side; sequence KTPLRY. Residues 72-89 form a helical membrane-spanning segment; sequence VAMVIWIYSAWRGLQLAY. Residues 90-144 are Periplasmic-facing; the sequence is EHTMIQLHPSPFMTCDFMARFPDWLPLGKWLPQVFVASGDCAERQWSFLTLEMPQ. A disulfide bond links cysteine 104 and cysteine 130. A helical transmembrane segment spans residues 145–163; the sequence is WLLGIFAAYLVVAIAVVIA. The Cytoplasmic segment spans residues 164-176; it reads QAFKPKKRDLFGR.

Belongs to the DsbB family.

The protein resides in the cell inner membrane. Required for disulfide bond formation in some periplasmic proteins. Acts by oxidizing the DsbA protein. This is Disulfide bond formation protein B from Salmonella paratyphi A (strain ATCC 9150 / SARB42).